The primary structure comprises 393 residues: Exosome complex component RRP45 (393 aa).

Positions 1–268 are ARE binding; it reads MRDTPLSNCE…SEITELINKA (268 aa).

This sequence belongs to the RNase PH family. In terms of assembly, component of the RNA exosome complex.

The protein localises to the cytoplasm. It is found in the nucleus. It localises to the nucleolus. The protein resides in the nucleoplasm. Functionally, non-catalytic component of the RNA exosome complex which has 3'-&gt;5' exoribonuclease activity and participates in a multitude of cellular RNA processing and degradation events. In the nucleus, the RNA exosome complex is involved in proper maturation of stable RNA species such as rRNA, snRNA and snoRNA, in the elimination of RNA processing by-products and non-coding 'pervasive' transcripts, such as antisense RNA species and promoter-upstream transcripts (PROMPTs), and of mRNAs with processing defects, thereby limiting or excluding their export to the cytoplasm. In the cytoplasm, the RNA exosome complex is involved in general mRNA turnover and specifically degrades inherently unstable mRNAs containing AU-rich elements (AREs) within their 3' untranslated regions, and in RNA surveillance pathways, preventing translation of aberrant mRNAs. The polypeptide is Exosome complex component RRP45 (Danio rerio (Zebrafish)).